The chain runs to 694 residues: Elongation factor G 2 (694 aa).

The 276-residue stretch at 5 to 280 (SKYRNIGIFA…AVVDYLPSPT (276 aa)) folds into the tr-type G domain. GTP is bound by residues 14 to 21 (AHVDAGKT), 78 to 82 (DTPGH), and 132 to 135 (NKLD).

This sequence belongs to the TRAFAC class translation factor GTPase superfamily. Classic translation factor GTPase family. EF-G/EF-2 subfamily.

Its subcellular location is the cytoplasm. Functionally, catalyzes the GTP-dependent ribosomal translocation step during translation elongation. During this step, the ribosome changes from the pre-translocational (PRE) to the post-translocational (POST) state as the newly formed A-site-bound peptidyl-tRNA and P-site-bound deacylated tRNA move to the P and E sites, respectively. Catalyzes the coordinated movement of the two tRNA molecules, the mRNA and conformational changes in the ribosome. This Pseudoalteromonas translucida (strain TAC 125) protein is Elongation factor G 2.